A 353-amino-acid polypeptide reads, in one-letter code: Phospho-N-acetylmuramoyl-pentapeptide-transferase (353 aa).

10 helical membrane passes run L24–A44, T66–A86, L88–F108, F129–D149, P160–A180, G192–A212, V229–Y249, V256–V276, I281–V301, and K330–L350.

The protein belongs to the glycosyltransferase 4 family. MraY subfamily. It depends on Mg(2+) as a cofactor.

The protein resides in the cell inner membrane. It carries out the reaction UDP-N-acetyl-alpha-D-muramoyl-L-alanyl-gamma-D-glutamyl-meso-2,6-diaminopimeloyl-D-alanyl-D-alanine + di-trans,octa-cis-undecaprenyl phosphate = di-trans,octa-cis-undecaprenyl diphospho-N-acetyl-alpha-D-muramoyl-L-alanyl-D-glutamyl-meso-2,6-diaminopimeloyl-D-alanyl-D-alanine + UMP. Its pathway is cell wall biogenesis; peptidoglycan biosynthesis. Functionally, catalyzes the initial step of the lipid cycle reactions in the biosynthesis of the cell wall peptidoglycan: transfers peptidoglycan precursor phospho-MurNAc-pentapeptide from UDP-MurNAc-pentapeptide onto the lipid carrier undecaprenyl phosphate, yielding undecaprenyl-pyrophosphoryl-MurNAc-pentapeptide, known as lipid I. This chain is Phospho-N-acetylmuramoyl-pentapeptide-transferase, found in Helicobacter acinonychis (strain Sheeba).